The sequence spans 506 residues: Maturase K (506 aa).

Belongs to the intron maturase 2 family. MatK subfamily.

It localises to the plastid. The protein localises to the chloroplast. Usually encoded in the trnK tRNA gene intron. Probably assists in splicing its own and other chloroplast group II introns. The polypeptide is Maturase K (Melilotus indicus (Sourclover)).